The primary structure comprises 199 residues: Adenylyl-sulfate kinase (199 aa).

Positions 1-22 (MSESNHITWHDSEVTKKQRQHK) are disordered. Position 34-41 (34-41 (GLSGSGKS)) interacts with ATP. Ser-108 (phosphoserine intermediate) is an active-site residue.

It belongs to the APS kinase family.

The catalysed reaction is adenosine 5'-phosphosulfate + ATP = 3'-phosphoadenylyl sulfate + ADP + H(+). Its pathway is sulfur metabolism; hydrogen sulfide biosynthesis; sulfite from sulfate: step 2/3. Functionally, catalyzes the synthesis of activated sulfate. The chain is Adenylyl-sulfate kinase from Staphylococcus epidermidis (strain ATCC 12228 / FDA PCI 1200).